Reading from the N-terminus, the 542-residue chain is Chaperonin GroEL 2 (542 aa).

Residues 30 to 33, lysine 51, 87 to 91, glycine 415, and aspartate 494 each bind ATP; these read TLGP and DGTTT.

The protein belongs to the chaperonin (HSP60) family. As to quaternary structure, forms a cylinder of 14 subunits composed of two heptameric rings stacked back-to-back. Interacts with the co-chaperonin GroES.

The protein resides in the cytoplasm. The enzyme catalyses ATP + H2O + a folded polypeptide = ADP + phosphate + an unfolded polypeptide.. Its function is as follows. Together with its co-chaperonin GroES, plays an essential role in assisting protein folding. The GroEL-GroES system forms a nano-cage that allows encapsulation of the non-native substrate proteins and provides a physical environment optimized to promote and accelerate protein folding. The chain is Chaperonin GroEL 2 from Syntrophobacter fumaroxidans (strain DSM 10017 / MPOB).